A 264-amino-acid chain; its full sequence is Molybdenum transport system permease protein ModB (264 aa).

A run of 6 helical transmembrane segments spans residues 11-31 (VYLPAIAGIVFVAMPLVAIAI), 57-77 (TAAASTVLCVLLGVPMALVLA), 90-110 (LILLPLVLPPVVGGIALLYAF), 127-147 (IAFSTAAVVLAQTFVSLPYLV), 176-196 (WWRVTLPLLLPGVVSGSVLAF), and 234-254 (AAVALSLLLVVVAALVVLGVG). Positions 51-253 (LLLSVKTAAA…VVAALVVLGV (203 aa)) constitute an ABC transmembrane type-1 domain.

This sequence belongs to the binding-protein-dependent transport system permease family. CysTW subfamily.

Its subcellular location is the cell membrane. Its function is as follows. Part of the binding-protein-dependent transport system ModABCD for molybdenum; probably responsible for the translocation of the substrate across the membrane. The sequence is that of Molybdenum transport system permease protein ModB (modB) from Mycobacterium bovis (strain ATCC BAA-935 / AF2122/97).